The primary structure comprises 203 residues: Large ribosomal subunit protein bL25 (203 aa).

Belongs to the bacterial ribosomal protein bL25 family. CTC subfamily. As to quaternary structure, part of the 50S ribosomal subunit; part of the 5S rRNA/L5/L18/L25 subcomplex. Contacts the 5S rRNA. Binds to the 5S rRNA independently of L5 and L18.

Its function is as follows. This is one of the proteins that binds to the 5S RNA in the ribosome where it forms part of the central protuberance. This chain is Large ribosomal subunit protein bL25, found in Rickettsia peacockii (strain Rustic).